A 1032-amino-acid chain; its full sequence is Putative oxidoreductase YgfK (1032 aa).

The 4Fe-4S ferredoxin-type domain occupies 928–958 (RFQTLHLDAYCNECGNCAQFCPWNGKPYKDK). [4Fe-4S] cluster contacts are provided by cysteine 938, cysteine 941, cysteine 944, and cysteine 948.

[4Fe-4S] cluster serves as cofactor.

Its function is as follows. Could be an iron-sulfur flavoprotein with NADPH:O(2) oxidoreductase activity. This chain is Putative oxidoreductase YgfK (ygfK), found in Escherichia coli (strain K12).